The following is a 381-amino-acid chain: Acetylornithine deacetylase (381 aa).

His-78 lines the Zn(2+) pocket. Asp-80 is an active-site residue. Asp-110 provides a ligand contact to Zn(2+). The active site involves Glu-142. Zn(2+) contacts are provided by Glu-143, Glu-167, and His-353.

Belongs to the peptidase M20A family. ArgE subfamily. In terms of assembly, homodimer. Zn(2+) serves as cofactor. It depends on Co(2+) as a cofactor. Requires glutathione as cofactor.

It is found in the cytoplasm. It catalyses the reaction N(2)-acetyl-L-ornithine + H2O = L-ornithine + acetate. It participates in amino-acid biosynthesis; L-arginine biosynthesis; L-ornithine from N(2)-acetyl-L-ornithine (linear): step 1/1. In terms of biological role, catalyzes the hydrolysis of the amide bond of N(2)-acetylated L-amino acids. Cleaves the acetyl group from N-acetyl-L-ornithine to form L-ornithine, an intermediate in L-arginine biosynthesis pathway, and a branchpoint in the synthesis of polyamines. The chain is Acetylornithine deacetylase from Moritella profunda.